The primary structure comprises 288 residues: UDP-3-O-acyl-N-acetylglucosamine deacetylase (288 aa).

3 residues coordinate Zn(2+): His79, His236, and Asp240. His263 (proton donor) is an active-site residue.

This sequence belongs to the LpxC family. Zn(2+) is required as a cofactor.

The enzyme catalyses a UDP-3-O-[(3R)-3-hydroxyacyl]-N-acetyl-alpha-D-glucosamine + H2O = a UDP-3-O-[(3R)-3-hydroxyacyl]-alpha-D-glucosamine + acetate. The protein operates within glycolipid biosynthesis; lipid IV(A) biosynthesis; lipid IV(A) from (3R)-3-hydroxytetradecanoyl-[acyl-carrier-protein] and UDP-N-acetyl-alpha-D-glucosamine: step 2/6. Its function is as follows. Catalyzes the hydrolysis of UDP-3-O-myristoyl-N-acetylglucosamine to form UDP-3-O-myristoylglucosamine and acetate, the committed step in lipid A biosynthesis. This chain is UDP-3-O-acyl-N-acetylglucosamine deacetylase, found in Rickettsia africae (strain ESF-5).